Reading from the N-terminus, the 289-residue chain is N-methyltransferase FrzE (289 aa).

This sequence belongs to the methyltransferase superfamily.

It carries out the reaction (1S,4S)-4-[(4-hydroxyphenyl)methyl]-2,5-diazaspiro[bicyclo[3.2.1]octane-6,1'-cyclohexan]-4'-one + S-adenosyl-L-methionine = (1S,4S)-4-[(4-hydroxyphenyl)methyl]-2-methyl-2,5-diazaspiro[bicyclo[3.2.1]octane-6,1'-cyclohexan]-4'-one + S-adenosyl-L-homocysteine + H(+). The enzyme catalyses (1S,4S)-4-[(4-methoxyphenyl)methyl]-2,5-diazaspiro[bicyclo[3.2.1]octane-6,1'-cyclohexan]-4'-one + S-adenosyl-L-methionine = (1S,4S)-4-[(4-methoxyphenyl)methyl]-2-methyl-2,5-diazaspiro[bicyclo[3.2.1]octane-6,1'-cyclohexan]-4'-one + S-adenosyl-L-homocysteine + H(+). It participates in secondary metabolite biosynthesis. N-methyltransferase; part of the gene cluster that mediates the biosynthesis of the alkaloid (-)-FR901483, a potent immunosuppressant that shows efficacy in animal models and a probable inhibitor of purine nucleotide biosynthesis by targeting phosphoribosylpyrophosphate amidotransferase (PPAT). Within the pathway, FrzE methylates the amine at position C10'. The biosynthesis of (-)-FR901483 starts with the condensation of two L-tyrosines to yield (S,S)-dityrosyl-piperazine. This process occurs in 3 steps with the non-canonical nonribosomal peptide synthetase FrzA catalyzing the reduction of L-tyrosine into L-tyrosinal, the spontaneous condensation of 2 L-tyrosinal units, and the subsequent reduction by the NmrA-like family domain-containing oxidoreductase FrzB. The cytochrome P450 monooxygenase FrzC then performs coupling between N10 and C1' to morph the piperazine into a 1,4-diazabicyclo[3.2.1]octane spiro-fused to a 2,5-cyclohexadienone. The dienone portion is further reduced to cyclohexanone by the flavin-dependent reductase FrzD. The methyltranserases (MTs) FrzE and FrzF are then involved in the methylation at the C10' amine and the C4 phenolic oxygen, respectively. The order of the two MTs appear to be interchangeable. Cleavage of the C9-N10' bond by the dioxygenase FrzG then leads to formation of a conjugated iminium. In addition to the oxidation of C9, an additional dehydrogenation between C7 and C8 can occur to give a likely shunt product. The next biosynthetic step is the intramolecular aldol condensation catalyzed by the newly identified aldolase FrzH to yield an aza-tricyclic product with the formation of a C9-C3' bond. The short-chain dehydrogenase/reductase FrzI then produces dephospho-(-)-FR901483 that is phosphorylated at C4'-OH into (-)-FR901483 by the phosphotransferase FrzJ. This chain is N-methyltransferase FrzE, found in Cladobotryum sp.